Here is a 115-residue protein sequence, read N- to C-terminus: Parathyroid hormone (115 aa).

The signal sequence occupies residues 1–25 (MIPAKDMAKVMIVMLAICFLTKSDG). Residues 26 to 31 (KSVKKR) constitute a propeptide that is removed on maturation. The important for receptor binding stretch occupies residues 51–69 (RVEWLRKKLQDVHNFIALG). Residues 72 to 96 (LAPRDAGSQRPRKKEDNILVESHEK) form a disordered region. Over residues 84-96 (KKEDNILVESHEK) the composition is skewed to basic and acidic residues.

Belongs to the parathyroid hormone family. In terms of assembly, interacts with PTH1R (via N-terminal extracellular domain).

The protein resides in the secreted. Parathyroid hormone elevates calcium level by dissolving the salts in bone and preventing their renal excretion. Acts by binding to its receptor, PTH1R, activating G protein-coupled receptor signaling. Stimulates [1-14C]-2-deoxy-D-glucose (2DG) transport and glycogen synthesis in osteoblastic cells. This chain is Parathyroid hormone (PTH), found in Macaca fascicularis (Crab-eating macaque).